The sequence spans 461 residues: Type IV secretion system protein PtlD homolog (461 aa).

Positions 1 to 24 are cleaved as a signal peptide; it reads MAGLSRILLSCTLACLLAGQAAQA. 5 consecutive transmembrane segments (helical) span residues 118–138, 232–252, 253–273, 294–314, and 333–353; these read LQPL…YALL, WLLC…LAAS, LLIV…LFLV, ALVF…VLAG, and MLAA…VPLA. The span at 376 to 411 shows a compositional bias: low complexity; sequence AHRQAAARQYAPRPAAAAAAAGPHQAGTYAASATPA. Positions 376 to 461 are disordered; that stretch reads AHRQAAARQY…RVLPRKPNLP (86 aa). Residues 439-453 show a composition bias toward basic and acidic residues; it reads VRRDDRPAPAPDRRV.

It localises to the cell membrane. This is Type IV secretion system protein PtlD homolog (ptlD) from Bordetella bronchiseptica (strain ATCC BAA-588 / NCTC 13252 / RB50) (Alcaligenes bronchisepticus).